A 457-amino-acid chain; its full sequence is MMGDLTTSFPATTLTTNEQPHVVVCSGAGMGHLIPFLNLASTLSSAPYRCKVTLLIVIPLITDAESHHISSFFSSHPTIHRLDFHVNLPAPKPNVDPFFLRYKSISDSAHRLPVHLSTLAPPISAVFSDFLFTQGLNTTLPHLPNYTFTTTSARFFTLMSYVPHLAKSSSSSPVEIPGLEPFPTDNIPPPFFNPDHIFTSFTISNANYLSLSKGIIVNTFDSFEPETLSALNSGDSLPDLPPVIPIGPLNELEHNKQEELLPWLDQQPEKSVLYVSFGNRTAMSSDQILELGMGLERSDCRFIWVVKTSKIDKDDKSELRKLFGEELYVKLSEKGKLVKWVNQTEILGHTAVGGFLSHCGWNSVMEAARRGVPILAWPQHGDQRENAWVVEKAGLGVWEREWSSGIQVAIVEKVKMIMGNNDLRNSAVRVGEEAKRACDVGGSSATALMNIIGSLKR.

The Proton acceptor role is filled by histidine 32. Residue histidine 32 participates in an anthocyanidin binding. The active-site Charge relay is aspartate 129. Threonine 150 is a UDP-alpha-D-glucose binding site. The segment at 279–280 (NR) is UDP. Positions 341, 343, 358, 361, 362, 363, and 366 each coordinate UDP-alpha-D-glucose. Glycine 381 is an an anthocyanidin binding site. The UDP-alpha-D-glucose site is built by aspartate 382 and glutamine 383.

The protein belongs to the UDP-glycosyltransferase family. As to expression, expressed in cotyledons. Not detected in flowers, leaves, roots and hypocotyls.

It catalyses the reaction a 3'-hydro-2'-hydroxy-beta-oxodihydrochalcone + UDP-alpha-D-glucose = a 3'-(beta-D-glucopyranosyl)-2'-hydroxy-beta-oxodihydrochalcone + UDP + H(+). UDP-glucose-dependent glucosyltransferase catalyzing the c-glucosylation of 2-hydroxyflavanones (2-hydroxynaringenin, 2-hydroxyeriodictyol and 2-hydroxypinocembrin) and phloretin. No activity with flavanones, flavones or flavonols. The sequence is that of UDP-glycosyltransferase 708C2 from Fagopyrum esculentum (Common buckwheat).